We begin with the raw amino-acid sequence, 180 residues long: Acireductone dioxygenase (180 aa).

The Fe(2+) site is built by H97, H99, E103, and H141. H97, H99, E103, and H141 together coordinate Ni(2+).

It belongs to the acireductone dioxygenase (ARD) family. Monomer. Fe(2+) is required as a cofactor. The cofactor is Ni(2+).

It catalyses the reaction 1,2-dihydroxy-5-(methylsulfanyl)pent-1-en-3-one + O2 = 3-(methylsulfanyl)propanoate + CO + formate + 2 H(+). The enzyme catalyses 1,2-dihydroxy-5-(methylsulfanyl)pent-1-en-3-one + O2 = 4-methylsulfanyl-2-oxobutanoate + formate + 2 H(+). It functions in the pathway amino-acid biosynthesis; L-methionine biosynthesis via salvage pathway; L-methionine from S-methyl-5-thio-alpha-D-ribose 1-phosphate: step 5/6. Functionally, catalyzes 2 different reactions between oxygen and the acireductone 1,2-dihydroxy-3-keto-5-methylthiopentene (DHK-MTPene) depending upon the metal bound in the active site. Fe-containing acireductone dioxygenase (Fe-ARD) produces formate and 2-keto-4-methylthiobutyrate (KMTB), the alpha-ketoacid precursor of methionine in the methionine recycle pathway. Ni-containing acireductone dioxygenase (Ni-ARD) produces methylthiopropionate, carbon monoxide and formate, and does not lie on the methionine recycle pathway. The chain is Acireductone dioxygenase from Cronobacter sakazakii (strain ATCC BAA-894) (Enterobacter sakazakii).